Here is a 269-residue protein sequence, read N- to C-terminus: Surfeit locus protein 4 (269 aa).

The next 5 helical transmembrane spans lie at 64-84 (FLAT…CVLI), 92-112 (YACF…SILW), 179-199 (FFSI…AIGF), 203-223 (LAAL…NAFW), and 242-262 (TTSV…GVSM). The short motif at 266 to 269 (KKEW) is the Di-lysine motif element.

The protein belongs to the SURF4 family.

The protein localises to the endoplasmic reticulum membrane. The protein resides in the endoplasmic reticulum-Golgi intermediate compartment membrane. It localises to the golgi apparatus membrane. Its function is as follows. Endoplasmic reticulum cargo receptor that mediates the export of lipoproteins by recruiting cargos into COPII vesicles to facilitate their secretion. Acts as a cargo receptor for lipoproteins bearing both APOB and APOA1, thereby regulating lipoprotein delivery and the maintenance of lipid homeostasis. In Takifugu rubripes (Japanese pufferfish), this protein is Surfeit locus protein 4.